The sequence spans 252 residues: Adenosine 5'-phosphosulfate reductase (252 aa).

Residues cysteine 125, cysteine 126, cysteine 208, and cysteine 211 each contribute to the [4Fe-4S] cluster site. The tract at residues 219–252 is disordered; sequence DGYSREGRWSDRDKTECGLHTSPEDEDGAHAAES. The span at 221–235 shows a compositional bias: basic and acidic residues; the sequence is YSREGRWSDRDKTEC. Cysteine 235 acts as the Nucleophile; cysteine thiosulfonate intermediate in catalysis.

This sequence belongs to the PAPS reductase family. CysH subfamily. It depends on [4Fe-4S] cluster as a cofactor.

It localises to the cytoplasm. The enzyme catalyses [thioredoxin]-disulfide + sulfite + AMP + 2 H(+) = adenosine 5'-phosphosulfate + [thioredoxin]-dithiol. It functions in the pathway sulfur metabolism; hydrogen sulfide biosynthesis; sulfite from sulfate. Catalyzes the formation of sulfite from adenosine 5'-phosphosulfate (APS) using thioredoxin as an electron donor. This chain is Adenosine 5'-phosphosulfate reductase, found in Salinibacter ruber (strain DSM 13855 / M31).